Reading from the N-terminus, the 677-residue chain is DNA ligase (677 aa).

NAD(+) is bound by residues 34-38, 83-84, and E117; these read DAEYD and SL. K119 serves as the catalytic N6-AMP-lysine intermediate. Positions 140, 175, 283, and 307 each coordinate NAD(+). The Zn(2+) site is built by C401, C404, C419, and C425. The region spanning 594–677 is the BRCT domain; that stretch reads SHLSLLHGKT…QYISPNTNEN (84 aa).

It belongs to the NAD-dependent DNA ligase family. LigA subfamily. It depends on Mg(2+) as a cofactor. Requires Mn(2+) as cofactor.

It carries out the reaction NAD(+) + (deoxyribonucleotide)n-3'-hydroxyl + 5'-phospho-(deoxyribonucleotide)m = (deoxyribonucleotide)n+m + AMP + beta-nicotinamide D-nucleotide.. DNA ligase that catalyzes the formation of phosphodiester linkages between 5'-phosphoryl and 3'-hydroxyl groups in double-stranded DNA using NAD as a coenzyme and as the energy source for the reaction. It is essential for DNA replication and repair of damaged DNA. This is DNA ligase from Ehrlichia canis (strain Jake).